We begin with the raw amino-acid sequence, 64 residues long: Leader peptide SpeFL (64 aa).

Positions 32 to 38 match the Ornithine recognition loop motif; that stretch reads HIRRTRH. Arginine 35 provides a ligand contact to L-ornithine.

Belongs to the speF operon leader peptide family. Binds ornithine in stalled 70S ribosomes, blocking the upper two-thirds of the exit tunnel. Contacts 23S rRNA and ribosomal proteins L4 and L22.

Functionally, a small protein (arrest peptide) encoded upstream of inducible ornithine carboxylase gene (speF) that controls expression of downstream genes (usually speF and potE) by transcriptional and translational attenuation. This Haemophilus influenzae (strain ATCC 51907 / DSM 11121 / KW20 / Rd) protein is Leader peptide SpeFL.